Here is a 91-residue protein sequence, read N- to C-terminus: Small nuclear ribonucleoprotein F (91 aa).

In terms of domain architecture, Sm spans 8 to 81 (APKPFLYDLK…VLFVRGIDDE (74 aa)).

It belongs to the snRNP Sm proteins family. SmF/LSm6 subfamily. In terms of assembly, core component of the spliceosomal U1, U2, U4 and U5 small nuclear ribonucleoproteins (snRNPs), the building blocks of the spliceosome. Most spliceosomal snRNPs contain a common set of Sm proteins, SNRPB, SNRPD1, SNRPD2, SNRPD3, SNRPE, SNRPF and SNRPG that assemble in a heptameric protein ring on the Sm site of the small nuclear RNA to form the core snRNP. Component of the U1 snRNP. Component of the U4/U6-U5 tri-snRNP complex. Component of the U7 snRNP complex. Component of the U11/U12 snRNPs that are part of the U12-type spliceosome. Part of the SMN-Sm complex that catalyzes core snRNPs assembly.

The protein resides in the cytoplasm. The protein localises to the cytosol. It is found in the nucleus. In terms of biological role, plays a role in pre-mRNA splicing as a core component of the spliceosomal U1, U2, U4 and U5 small nuclear ribonucleoproteins (snRNPs), the building blocks of the spliceosome. Component of both the pre-catalytic spliceosome B complex and activated spliceosome C complexes. Is also a component of the minor U12 spliceosome. This chain is Small nuclear ribonucleoprotein F (snrpf), found in Dictyostelium discoideum (Social amoeba).